Reading from the N-terminus, the 241-residue chain is Ribonuclease HII (241 aa).

The 185-residue stretch at 57 to 241 folds into the RNase H type-2 domain; it reads NFIAGVDEAG…RTYVEKILKG (185 aa). A divalent metal cation-binding residues include Asp63, Glu64, and Asp155.

It belongs to the RNase HII family. The cofactor is Mn(2+). Mg(2+) is required as a cofactor.

The protein resides in the cytoplasm. The catalysed reaction is Endonucleolytic cleavage to 5'-phosphomonoester.. In terms of biological role, endonuclease that specifically degrades the RNA of RNA-DNA hybrids. This is Ribonuclease HII from Caldanaerobacter subterraneus subsp. tengcongensis (strain DSM 15242 / JCM 11007 / NBRC 100824 / MB4) (Thermoanaerobacter tengcongensis).